Reading from the N-terminus, the 257-residue chain is DNA repair protein RecO (257 aa).

This sequence belongs to the RecO family.

Involved in DNA repair and RecF pathway recombination. In Streptococcus thermophilus (strain CNRZ 1066), this protein is DNA repair protein RecO.